The primary structure comprises 574 residues: Sulfate adenylyltransferase (574 aa).

The N-terminal stretch occupies residues 1–169; it reads MANPPHGGVL…IEAINKLNHY (169 aa). Positions 170 to 394 are catalytic; it reads DYVALRYTPA…LRESSPPRHT (225 aa). Q197 contributes to the sulfate binding site. ATP-binding positions include 197–200 and 291–294; these read QTRN and GRDH. Active-site residues include T198, R199, and N200. R199 is a sulfate binding site. A295 contacts sulfate. V333 is a binding site for ATP. Residues 395–574 are allosteric regulation domain; adenylyl-sulfate kinase-like; the sequence is QGFTIFLTGY…LETEGFFDRS (180 aa). 3'-phosphoadenylyl sulfate is bound by residues 434–437, R451, 477–478, and R516; these read DTVR and IA.

In the N-terminal section; belongs to the sulfate adenylyltransferase family. The protein in the C-terminal section; belongs to the APS kinase family. In terms of assembly, homohexamer. Dimer of trimers.

It is found in the cytoplasm. It catalyses the reaction sulfate + ATP + H(+) = adenosine 5'-phosphosulfate + diphosphate. It functions in the pathway sulfur metabolism; hydrogen sulfide biosynthesis; sulfite from sulfate: step 1/3. With respect to regulation, allosterically inhibited by 3'-phosphoadenosine 5'-phosphosulfate (PAPS). Functionally, catalyzes the first intracellular reaction of sulfate assimilation, forming adenosine-5'-phosphosulfate (APS) from inorganic sulfate and ATP. Plays an important role in sulfate activation as a component of the biosynthesis pathway of sulfur-containing amino acids. The chain is Sulfate adenylyltransferase from Neosartorya fischeri (strain ATCC 1020 / DSM 3700 / CBS 544.65 / FGSC A1164 / JCM 1740 / NRRL 181 / WB 181) (Aspergillus fischerianus).